A 116-amino-acid chain; its full sequence is NADH-quinone oxidoreductase subunit A (116 aa).

Helical transmembrane passes span 3 to 23 (FTLL…ALGI), 61 to 81 (FAIL…WAVV), and 85 to 105 (LGVY…LGLA).

Belongs to the complex I subunit 3 family. In terms of assembly, NDH-1 is composed of 14 different subunits. Subunits NuoA, H, J, K, L, M, N constitute the membrane sector of the complex.

The protein localises to the cell inner membrane. The catalysed reaction is a quinone + NADH + 5 H(+)(in) = a quinol + NAD(+) + 4 H(+)(out). NDH-1 shuttles electrons from NADH, via FMN and iron-sulfur (Fe-S) centers, to quinones in the respiratory chain. The immediate electron acceptor for the enzyme in this species is believed to be a menaquinone. Couples the redox reaction to proton translocation (for every two electrons transferred, four hydrogen ions are translocated across the cytoplasmic membrane), and thus conserves the redox energy in a proton gradient. The chain is NADH-quinone oxidoreductase subunit A from Phocaeicola vulgatus (strain ATCC 8482 / DSM 1447 / JCM 5826 / CCUG 4940 / NBRC 14291 / NCTC 11154) (Bacteroides vulgatus).